The following is a 190-amino-acid chain: Putative resolvase R771 (190 aa).

The H-T-H motif DNA-binding region spans 11-30; it reads SSVLGVHQRTLYQWDKKGWI. In terms of domain architecture, Resolvase/invertase-type recombinase catalytic spans 61–190; it reads LSICYVRVSS…RNGLKKYSNK (130 aa). Residues 66-92 are a coiled coil; the sequence is VRVSSNNQKDDLERQIKFMKKKYPNHT. The O-(5'-phospho-DNA)-serine intermediate role is filled by S69.

It belongs to the site-specific recombinase resolvase family.

Resolvase catalyzes the resolution (a site-specific recombination) of the cointegrated replicon to yield the final transposition products. This is Putative resolvase R771 from Acanthamoeba polyphaga (Amoeba).